Here is a 226-residue protein sequence, read N- to C-terminus: Probable transcriptional regulatory protein y4xI (226 aa).

A Response regulatory domain is found at 1–114 (MRTLLVDTDL…ELIARMRALL (114 aa)). A DNA-binding region (ompR/PhoB-type) is located at residues 122–220 (CPIIEFGNLH…VRGIGYTLEL (99 aa)).

Its subcellular location is the cytoplasm. The polypeptide is Probable transcriptional regulatory protein y4xI (Sinorhizobium fredii (strain NBRC 101917 / NGR234)).